We begin with the raw amino-acid sequence, 147 residues long: Small ribosomal subunit protein eS19 (147 aa).

It belongs to the eukaryotic ribosomal protein eS19 family. Component of the small ribosomal subunit.

Its subcellular location is the cytoplasm. It localises to the nucleus. Component of the small ribosomal subunit. The ribosome is a large ribonucleoprotein complex responsible for the synthesis of proteins in the cell. Required for pre-rRNA processing and maturation of 40S ribosomal subunits. The sequence is that of Small ribosomal subunit protein eS19 (rps19) from Gillichthys mirabilis (Long-jawed mudsucker).